The following is a 192-amino-acid chain: Thymidylate kinase (192 aa).

Residue 7-14 coordinates ATP; that stretch reads GIDCVGKS.

The protein belongs to the thymidylate kinase family.

It carries out the reaction dTMP + ATP = dTDP + ADP. Its function is as follows. Phosphorylation of dTMP to form dTDP in both de novo and salvage pathways of dTTP synthesis. The chain is Thymidylate kinase from Campylobacter jejuni subsp. doylei (strain ATCC BAA-1458 / RM4099 / 269.97).